The chain runs to 138 residues: MASLPEPQKLARNFARCNDWEEKYLYIIELGERLDPLPDEWRNPDNLISGCQSQVWIVAQPDEQGVIVLHGDSDAAIVKGLIAVVFSLYQGLTAQEIVELDVRPFFESLALNQHLTPSRSQGLEAMLRAIRAHAAALL.

C51 (cysteine persulfide intermediate) is an active-site residue.

It belongs to the SufE family. As to quaternary structure, homodimer. Interacts with SufS.

Its subcellular location is the cytoplasm. It participates in cofactor biosynthesis; iron-sulfur cluster biosynthesis. In terms of biological role, participates in cysteine desulfuration mediated by SufS. Cysteine desulfuration mobilizes sulfur from L-cysteine to yield L-alanine and constitutes an essential step in sulfur metabolism for biosynthesis of a variety of sulfur-containing biomolecules. Functions as a sulfur acceptor for SufS, by mediating the direct transfer of the sulfur atom from the S-sulfanylcysteine of SufS, an intermediate product of cysteine desulfuration process. This chain is Cysteine desulfuration protein SufE, found in Pectobacterium carotovorum subsp. carotovorum (strain PC1).